We begin with the raw amino-acid sequence, 253 residues long: 3-dehydroquinate dehydratase (253 aa).

3-dehydroquinate-binding positions include 46–48 (EWR) and Arg-82. His-143 functions as the Proton donor/acceptor in the catalytic mechanism. The active-site Schiff-base intermediate with substrate is Lys-170. Residues Arg-213, Ser-232, and Gln-236 each contribute to the 3-dehydroquinate site.

Belongs to the type-I 3-dehydroquinase family. In terms of assembly, homodimer.

It catalyses the reaction 3-dehydroquinate = 3-dehydroshikimate + H2O. It participates in metabolic intermediate biosynthesis; chorismate biosynthesis; chorismate from D-erythrose 4-phosphate and phosphoenolpyruvate: step 3/7. Functionally, involved in the third step of the chorismate pathway, which leads to the biosynthesis of aromatic amino acids. Catalyzes the cis-dehydration of 3-dehydroquinate (DHQ) and introduces the first double bond of the aromatic ring to yield 3-dehydroshikimate. The protein is 3-dehydroquinate dehydratase of Syntrophotalea carbinolica (strain DSM 2380 / NBRC 103641 / GraBd1) (Pelobacter carbinolicus).